We begin with the raw amino-acid sequence, 115 residues long: NADH-ubiquinone oxidoreductase chain 3 (115 aa).

3 helical membrane passes run 5 to 25 (LTFM…FWLP), 55 to 75 (FFLV…LLPL), and 86 to 106 (LMLT…AYEW).

The protein belongs to the complex I subunit 3 family. As to quaternary structure, core subunit of respiratory chain NADH dehydrogenase (Complex I) which is composed of 45 different subunits. Interacts with TMEM186. Interacts with TMEM242.

It localises to the mitochondrion inner membrane. It catalyses the reaction a ubiquinone + NADH + 5 H(+)(in) = a ubiquinol + NAD(+) + 4 H(+)(out). Functionally, core subunit of the mitochondrial membrane respiratory chain NADH dehydrogenase (Complex I) which catalyzes electron transfer from NADH through the respiratory chain, using ubiquinone as an electron acceptor. Essential for the catalytic activity of complex I. This Avahi unicolor (Sambirano woolly lemur) protein is NADH-ubiquinone oxidoreductase chain 3.